The chain runs to 396 residues: L-lactate dehydrogenase (396 aa).

Residues Met-1–Gly-380 enclose the FMN hydroxy acid dehydrogenase domain. Tyr-24 provides a ligand contact to substrate. 2 residues coordinate FMN: Ser-106 and Gln-127. Tyr-129 is a substrate binding site. Residue Thr-155 coordinates FMN. Arg-164 contributes to the substrate binding site. Lys-251 serves as a coordination point for FMN. Catalysis depends on His-275, which acts as the Proton acceptor. Arg-278 is a binding site for substrate. Position 306–330 (Asp-306–Arg-330) interacts with FMN.

It belongs to the FMN-dependent alpha-hydroxy acid dehydrogenase family. The cofactor is FMN.

It is found in the cell inner membrane. It catalyses the reaction (S)-lactate + A = pyruvate + AH2. Catalyzes the conversion of L-lactate to pyruvate. Is coupled to the respiratory chain. The sequence is that of L-lactate dehydrogenase from Escherichia coli O1:K1 / APEC.